The following is a 635-amino-acid chain: MTILRHPLRFLFKPRFLYFQSPSGQSSRPFSTSQILRTALDMPPPPVDTTQRLAKLRELMAQNKVDVYTFISSFTGSAGCAIVSMSKAALSTDGRYFSQAAKQLDSNWTLLKRGVEGVPTWEEWTAEQAENGKVVGVDPSLITAADARKLSQTLKTTGGSLIGIDQNLIDAVWGDERPARPSNQITVQPVERAGKSFEEKVEDLRKELAAKKRSAMVISTLDEIAWLFNLRGSDIPYNPVFFSYAIVTPSVAELYVDENKLSPEARKHLEGKVVLKPYESIFQASKALAESKASASSGSGGKFLLSNKASWSVSLALGGEQNVVEVRSPITDAKAIKNEVELEGFRKCHIRDGAALIEYFAWLENALIKEGAKLDEVDGANKLFEIRKKYDHFVGNSFDTISSTGANGATIHYKPEKSTCAVIDPKAMYLCDSGGQYLDGTTDTTRTLHFGEPTEFQKKAYALVLKGHISIDNAIFPKGTTGYAIDSFARQHLWKEGLDYLHGTGHGVGSFLNVHEGPMGIGSRAQYAEVPLSASNVLSNEPGYYEDGNFGIRLENLVICKEVKTPHKFGDKPFLGFEYITLVPFCQKLLDASLLTEAERKWVNDYHAKVWEKTSPFFEKDELTTNWLKRETQPI.

The Mn(2+) site is built by Asp-432, Asp-443, Glu-541, and Glu-555.

This sequence belongs to the peptidase M24B family. Mn(2+) serves as cofactor.

The enzyme catalyses Release of any N-terminal amino acid, including proline, that is linked to proline, even from a dipeptide or tripeptide.. Its function is as follows. Catalyzes the removal of a penultimate prolyl residue from the N-termini of peptides. The protein is Probable Xaa-Pro aminopeptidase P (AMPP) of Arthroderma gypseum (strain ATCC MYA-4604 / CBS 118893) (Microsporum gypseum).